The chain runs to 182 residues: ATP synthase subunit delta (182 aa).

Belongs to the ATPase delta chain family. F-type ATPases have 2 components, F(1) - the catalytic core - and F(0) - the membrane proton channel. F(1) has five subunits: alpha(3), beta(3), gamma(1), delta(1), epsilon(1). F(0) has three main subunits: a(1), b(2) and c(10-14). The alpha and beta chains form an alternating ring which encloses part of the gamma chain. F(1) is attached to F(0) by a central stalk formed by the gamma and epsilon chains, while a peripheral stalk is formed by the delta and b chains.

It is found in the cell inner membrane. Functionally, f(1)F(0) ATP synthase produces ATP from ADP in the presence of a proton or sodium gradient. F-type ATPases consist of two structural domains, F(1) containing the extramembraneous catalytic core and F(0) containing the membrane proton channel, linked together by a central stalk and a peripheral stalk. During catalysis, ATP synthesis in the catalytic domain of F(1) is coupled via a rotary mechanism of the central stalk subunits to proton translocation. Its function is as follows. This protein is part of the stalk that links CF(0) to CF(1). It either transmits conformational changes from CF(0) to CF(1) or is implicated in proton conduction. This Pseudothermotoga lettingae (strain ATCC BAA-301 / DSM 14385 / NBRC 107922 / TMO) (Thermotoga lettingae) protein is ATP synthase subunit delta.